Consider the following 566-residue polypeptide: Mitochondrial distribution and morphology protein 34 (566 aa).

One can recognise an SMP-LTD domain in the interval 1–195 (MAFNFNWSPL…LPAIIHRLSL (195 aa)). 4 disordered regions span residues 212 to 237 (PEQTAGEGPGQDPLASPPQDPVDSLG), 349 to 401 (GYGL…NPSV), 432 to 518 (PERR…SSST), and 539 to 566 (KLMPTSSCGGAFWGRPDHEEYPPPAYGQ). Positions 358 to 370 (RHSKAHSRKRKKR) are enriched in basic residues. Over residues 380–401 (TSDTASVSDESAYTETASNPSV) the composition is skewed to polar residues. Basic and acidic residues predominate over residues 444 to 454 (PRRDIATEMLR).

The protein belongs to the MDM34 family. Component of the ER-mitochondria encounter structure (ERMES) or MDM complex, composed of mmm1, mdm10, mdm12 and mdm34.

It is found in the mitochondrion outer membrane. Component of the ERMES/MDM complex, which serves as a molecular tether to connect the endoplasmic reticulum (ER) and mitochondria. Components of this complex are involved in the control of mitochondrial shape and protein biogenesis, and function in nonvesicular lipid trafficking between the ER and mitochondria. Mdm34 is required for the interaction of the ER-resident membrane protein mmm1 and the outer mitochondrial membrane-resident beta-barrel protein mdm10. This is Mitochondrial distribution and morphology protein 34 from Aspergillus flavus (strain ATCC 200026 / FGSC A1120 / IAM 13836 / NRRL 3357 / JCM 12722 / SRRC 167).